A 518-amino-acid chain; its full sequence is AarF domain-containing kinase 1 (518 aa).

In terms of domain architecture, Protein kinase spans 149–468 (SFEREPLGTA…SKCCVQSSYA (320 aa)). ATP contacts are provided by residues 155 to 163 (LGTASLAQV) and Lys177. Catalysis depends on Asp309, which acts as the Proton acceptor.

This sequence belongs to the protein kinase superfamily. ADCK protein kinase family.

The protein localises to the mitochondrion. Essential for maintaining mitochondrial cristae formation and mitochondrial function by acting via YME1L to regulate the mitochondrial structural proteins Opa1 and Mitofilin. This function is likely to be kinase-independent. Functions in tracheal development and larval molting probably by acting in sterol modification and/or intracellular lipid trafficking. The action of this enzyme is not yet clear. It is not known if it has protein kinase activity and what type of substrate it would phosphorylate (Ser, Thr or Tyr). The protein is AarF domain-containing kinase 1 of Drosophila melanogaster (Fruit fly).